A 185-amino-acid chain; its full sequence is Adenine phosphoribosyltransferase (185 aa).

It belongs to the purine/pyrimidine phosphoribosyltransferase family. As to quaternary structure, homodimer.

It localises to the cytoplasm. The catalysed reaction is AMP + diphosphate = 5-phospho-alpha-D-ribose 1-diphosphate + adenine. The protein operates within purine metabolism; AMP biosynthesis via salvage pathway; AMP from adenine: step 1/1. Catalyzes a salvage reaction resulting in the formation of AMP, that is energically less costly than de novo synthesis. In Nocardioides sp. (strain ATCC BAA-499 / JS614), this protein is Adenine phosphoribosyltransferase.